The following is a 467-amino-acid chain: Geranylgeranyl diphosphate reductase, chloroplastic (467 aa).

A chloroplast-targeting transit peptide spans 1 to 43 (MATTVTLKSFTGLRQSSTEQTNFVSHVPSSLSLPQRRTSLRVT).

The protein belongs to the geranylgeranyl reductase family. ChlP subfamily. Part of the FLU-containing chloroplast membrane complex composed of FLU, CRD1, PORB, PORC, CHLP and HEMA1.

It is found in the plastid. The protein localises to the chloroplast membrane. The catalysed reaction is phytyl diphosphate + 3 NADP(+) = geranylgeranyl diphosphate + 3 NADPH + 3 H(+). Its pathway is porphyrin-containing compound metabolism; chlorophyll biosynthesis. It participates in cofactor biosynthesis; tocopherol biosynthesis. Catalyzes the reduction of geranylgeranyl diphosphate to phytyl diphosphate, providing phytol for both tocopherol and chlorophyll synthesis. The sequence is that of Geranylgeranyl diphosphate reductase, chloroplastic (CHLP) from Arabidopsis thaliana (Mouse-ear cress).